A 588-amino-acid chain; its full sequence is Tannase (588 aa).

Residues 1–18 (MRQHSRMAVAALAAGANA) form the signal peptide. Disulfide bonds link Cys-25–Cys-71, Cys-194–Cys-502, and Cys-261–Cys-278. Ser-195 serves as the catalytic Acyl-ester intermediate. 4 residues coordinate Ca(2+): Asp-262, Asp-265, Asp-269, and Val-271. At Gln-317 the chain carries Pyrrolidone carboxylic acid. Catalysis depends on charge relay system residues Asp-455 and His-501.

It belongs to the tannase family. Heterooctamer of 4 33 kDa and 4 30 kDa subunits linked by disulfide bond(s). The protein is glycosylated to a carbohydrate content of 22.7%. Post-translationally, the N-terminus of the 30 kDa subunit is blocked.

The enzyme catalyses digallate + H2O = 2 3,4,5-trihydroxybenzoate + H(+). Hydrolyzes ester bonds of tannic acid to produce gallic acid and glucose. The polypeptide is Tannase (Aspergillus oryzae (strain ATCC 42149 / RIB 40) (Yellow koji mold)).